A 212-amino-acid polypeptide reads, in one-letter code: dITP/XTP pyrophosphatase (212 aa).

7–12 (SNNAKK) provides a ligand contact to substrate. Mg(2+) contacts are provided by glutamate 39 and aspartate 68. Aspartate 68 serves as the catalytic Proton acceptor. Substrate is bound by residues serine 69, 165–168 (FGYD), lysine 188, and 193–194 (HR).

This sequence belongs to the HAM1 NTPase family. As to quaternary structure, homodimer. The cofactor is Mg(2+).

The enzyme catalyses XTP + H2O = XMP + diphosphate + H(+). It carries out the reaction dITP + H2O = dIMP + diphosphate + H(+). The catalysed reaction is ITP + H2O = IMP + diphosphate + H(+). Pyrophosphatase that catalyzes the hydrolysis of nucleoside triphosphates to their monophosphate derivatives, with a high preference for the non-canonical purine nucleotides XTP (xanthosine triphosphate), dITP (deoxyinosine triphosphate) and ITP. Seems to function as a house-cleaning enzyme that removes non-canonical purine nucleotides from the nucleotide pool, thus preventing their incorporation into DNA/RNA and avoiding chromosomal lesions. The polypeptide is dITP/XTP pyrophosphatase (Leptothrix cholodnii (strain ATCC 51168 / LMG 8142 / SP-6) (Leptothrix discophora (strain SP-6))).